The chain runs to 105 residues: uncharacterized protein (105 aa).

This is an uncharacterized protein from Acidianus bottle-shaped virus (isolate Italy/Pozzuoli) (ABV).